The primary structure comprises 222 residues: Glutathione S-transferase A6 (222 aa).

In terms of domain architecture, GST N-terminal spans 3–83 (EKPLFHYDEA…YFSSKYNLYG (81 aa)). Residues tyrosine 9, arginine 45, 54–55 (QV), and 67–68 (QT) each bind glutathione. A GST C-terminal domain is found at 85–208 (DMKERALIDM…QPGSQRQPPV (124 aa)).

The protein belongs to the GST superfamily. Alpha family. As to quaternary structure, homodimer or heterodimer of GSTA1 and GSTA2.

The protein resides in the cytoplasm. It catalyses the reaction RX + glutathione = an S-substituted glutathione + a halide anion + H(+). Its function is as follows. Conjugation of reduced glutathione to a wide number of exogenous and endogenous hydrophobic electrophiles. This Rattus norvegicus (Rat) protein is Glutathione S-transferase A6 (Gsta6).